The chain runs to 274 residues: Centriolar and ciliogenesis-associated protein hyls-1 (274 aa).

Disordered regions lie at residues 156 to 188 (RSSV…SSRP) and 255 to 274 (NNED…PYID). The span at 171–183 (VGLSTETEQSELQ) shows a compositional bias: polar residues. A compositionally biased stretch (basic and acidic residues) spans 257-274 (EDWKANHDKDWSPRPYID).

This sequence belongs to the HYLS1 family. Interacts with sas-4; leading to its localization into newly forming centrioles.

Its subcellular location is the cytoplasm. It is found in the cytoskeleton. It localises to the microtubule organizing center. The protein resides in the centrosome. The protein localises to the centriole. Its subcellular location is the cell projection. It is found in the cilium. In terms of biological role, plays an important role in ciliogenesis. This is Centriolar and ciliogenesis-associated protein hyls-1 from Caenorhabditis elegans.